A 507-amino-acid polypeptide reads, in one-letter code: Cuticlin-4 (507 aa).

The N-terminal stretch at 1 to 19 (MFHFTRILAAFLLPTLCFC) is a signal peptide. Over 20–471 (GYSTAPSSTV…KTCFSTSRMY (452 aa)) the chain is Extracellular. One can recognise a ZP domain in the interval 42 to 280 (VCETASISLL…YGCSNTQPQC (239 aa)). The tract at residues 292–350 (KTTETAEPYPYDSHESGYPTRPANYPVASSRYPIPTTQAPASYPSSPAPPPPGADIDNG) is disordered. N-linked (GlcNAc...) asparagine glycans are attached at residues N374 and N408. A helical transmembrane segment spans residues 472–492 (FTLILLCLLFATTVVVFIVIV). Topologically, residues 493–507 (QKQRQILAQTAFFKP) are cytoplasmic.

The protein localises to the cell membrane. In terms of biological role, plays a role in alae formation and subsequent cuticle attachment in adults. This chain is Cuticlin-4, found in Caenorhabditis elegans.